Consider the following 228-residue polypeptide: Uracil-DNA glycosylase (228 aa).

The active-site Proton acceptor is Asp-64.

The protein belongs to the uracil-DNA glycosylase (UDG) superfamily. UNG family. In terms of assembly, monomer.

The protein localises to the cytoplasm. It carries out the reaction Hydrolyzes single-stranded DNA or mismatched double-stranded DNA and polynucleotides, releasing free uracil.. Its function is as follows. Excises uracil residues from the DNA which can arise as a result of misincorporation of dUMP residues by DNA polymerase or due to deamination of cytosine. The chain is Uracil-DNA glycosylase from Escherichia coli O6:H1 (strain CFT073 / ATCC 700928 / UPEC).